A 273-amino-acid polypeptide reads, in one-letter code: Large ribosomal subunit protein uL2 (273 aa).

Residues R221 to T263 are disordered. Over residues T252–T263 the composition is skewed to basic residues.

Belongs to the universal ribosomal protein uL2 family. As to quaternary structure, part of the 50S ribosomal subunit. Forms a bridge to the 30S subunit in the 70S ribosome.

Functionally, one of the primary rRNA binding proteins. Required for association of the 30S and 50S subunits to form the 70S ribosome, for tRNA binding and peptide bond formation. It has been suggested to have peptidyltransferase activity; this is somewhat controversial. Makes several contacts with the 16S rRNA in the 70S ribosome. The chain is Large ribosomal subunit protein uL2 from Buchnera aphidicola subsp. Cinara cedri (strain Cc).